Reading from the N-terminus, the 296-residue chain is Diheme cytochrome c-type (296 aa).

Residues Cys52, Cys55, His56, Cys202, Cys205, and His206 each contribute to the heme c site.

Post-translationally, binds 2 heme c groups covalently per subunit.

It is found in the cell membrane. Particularly expressed when cells generate energy via aerobic respiration. This Cereibacter sphaeroides (strain ATCC 17023 / DSM 158 / JCM 6121 / CCUG 31486 / LMG 2827 / NBRC 12203 / NCIMB 8253 / ATH 2.4.1.) (Rhodobacter sphaeroides) protein is Diheme cytochrome c-type (cycG).